Consider the following 165-residue polypeptide: MGCCGCSEGCGSGCGGCGSGCGGCGSGCGGCGSSCCVPVCCCKPVCCCVPACSCSSCGSCGGSKGGCGSCGGSKGGCGSCGGSKGGCGSCGCSQCSCYKPCCCSSGCGSSCCQSSCCKPCCCQSSCCKPCCCSSGCGSSCCQSSCCNPCCSQSSCCVPVCCQCKI.

Repeat copies occupy residues 35-38 (CCVP), 41-44 (CCKP), 47-50 (CCVP), 116-119 (CCKP), 126-129 (CCKP), 145-148 (CCNP), and 155-158 (CCVP). The segment at 35–158 (CCVPVCCCKP…CCSQSSCCVP (124 aa)) is 7 X 4 AA repeats of C-C-X-P.

The protein belongs to the KRTAP type 5 family. Interacts with hair keratins. Expressed in hair root but not in skin.

Functionally, in the hair cortex, hair keratin intermediate filaments are embedded in an interfilamentous matrix, consisting of hair keratin-associated protein (KRTAP), which are essential for the formation of a rigid and resistant hair shaft through their extensive disulfide bond cross-linking with abundant cysteine residues of hair keratins. The matrix proteins include the high-sulfur and high-glycine-tyrosine keratins. This is Keratin-associated protein 5-7 (KRTAP5-7) from Homo sapiens (Human).